The sequence spans 157 residues: MGVIEFLLALAQDMILAAIPAVGFAMVFNVPVRALRWCALLGSIGHGSRMILMTSGLNIEWSTFMASMLVGTIGIQWSRWYLAHPKVFTVAAVIPMFPGISAYTAMISAVKISQLGYSEPLMITLLTNFLTASSIVGALSIGLSIPGLWLYRKRPRV.

Helical transmembrane passes span 8 to 28 (LALAQDMILAAIPAVGFAMVF), 50 to 70 (MILMTSGLNIEWSTFMASMLV), 87 to 107 (VFTVAAVIPMFPGISAYTAMI), and 129 to 149 (FLTASSIVGALSIGLSIPGLW).

The protein belongs to the ThrE exporter (TC 2.A.79) family. The transporter is composed of YjjB and YjjP.

The protein resides in the cell inner membrane. In terms of biological role, involved in succinate export with YjjP. Both proteins are required for export. In Escherichia coli O127:H6 (strain E2348/69 / EPEC), this protein is Probable succinate transporter subunit YjjB.